The following is a 380-amino-acid chain: GTP-binding protein 10 (380 aa).

Residues 13 to 148 (GNFVDNVRLY…RNIRLDLKLI (136 aa)) form the Obg domain. One can recognise an OBG-type G domain in the interval 149 to 344 (ADFGLVGFPN…LKSLIRQSLE (196 aa)). Residues 155-162 (GFPNAGKS), 202-206 (DLPGL), and 278-281 (NKMD) contribute to the GTP site.

This sequence belongs to the TRAFAC class OBG-HflX-like GTPase superfamily. OBG GTPase family.

It is found in the nucleus. Its subcellular location is the nucleolus. Functionally, may be involved in the ribosome maturation process. This is GTP-binding protein 10 (gtpbp10) from Danio rerio (Zebrafish).